A 247-amino-acid polypeptide reads, in one-letter code: Enolase-phosphatase E1 (247 aa).

Residues Asp-12 and Glu-14 each contribute to the Mg(2+) site. Substrate is bound by residues 141-142 (SS) and Lys-175. Asp-200 provides a ligand contact to Mg(2+).

It belongs to the HAD-like hydrolase superfamily. MasA/MtnC family. As to quaternary structure, monomer. The cofactor is Mg(2+).

It localises to the cytoplasm. Its subcellular location is the nucleus. The catalysed reaction is 5-methylsulfanyl-2,3-dioxopentyl phosphate + H2O = 1,2-dihydroxy-5-(methylsulfanyl)pent-1-en-3-one + phosphate. The protein operates within amino-acid biosynthesis; L-methionine biosynthesis via salvage pathway; L-methionine from S-methyl-5-thio-alpha-D-ribose 1-phosphate: step 3/6. It functions in the pathway amino-acid biosynthesis; L-methionine biosynthesis via salvage pathway; L-methionine from S-methyl-5-thio-alpha-D-ribose 1-phosphate: step 4/6. In terms of biological role, bifunctional enzyme that catalyzes the enolization of 2,3-diketo-5-methylthiopentyl-1-phosphate (DK-MTP-1-P) into the intermediate 2-hydroxy-3-keto-5-methylthiopentenyl-1-phosphate (HK-MTPenyl-1-P), which is then dephosphorylated to form the acireductone 1,2-dihydroxy-3-keto-5-methylthiopentene (DHK-MTPene). This chain is Enolase-phosphatase E1, found in Drosophila willistoni (Fruit fly).